We begin with the raw amino-acid sequence, 223 residues long: Sigma non-opioid intracellular receptor 1 (223 aa).

Topologically, residues 1 to 7 (MAVLSSR) are lumenal. A helical membrane pass occupies residues 8 to 29 (AMRAALGLAVLAVVIQLLRTWL). Topologically, residues 30–223 (SSKSYLFNQK…HTYLSELGLS (194 aa)) are cytoplasmic. Positions 98–105 (SLTEYILL) are important for ligand-binding. The interval 176–223 (FIPSTMGFALADTIFSTQDFCTLFYTFRIYARCLLLETHTYLSELGLS) is C-terminal hydrophobic region.

Belongs to the ERG2 family. As to quaternary structure, homotrimer.

It localises to the nucleus inner membrane. The protein localises to the nucleus outer membrane. The protein resides in the nucleus envelope. Its subcellular location is the cytoplasmic vesicle. It is found in the endoplasmic reticulum membrane. It localises to the membrane. Its function is as follows. May function in lipid transport from the endoplasmic reticulum and be involved in a wide array of cellular functions probably through regulation of the biogenesis of lipid microdomains at the plasma membrane. May regulate calcium efflux at the endoplasmic reticulum. This Taricha granulosa (Roughskin newt) protein is Sigma non-opioid intracellular receptor 1 (SIGMAR1).